A 250-amino-acid chain; its full sequence is UPF0259 membrane protein SG1383 (250 aa).

Helical transmembrane passes span 20–40, 86–106, 121–141, 146–166, 191–211, and 219–239; these read FASI…LGHA, AGTL…LTMI, IGLS…TTLL, LLLI…APVI, LLAP…LLAT, and LVAV…LLIY.

The protein belongs to the UPF0259 family.

The protein localises to the cell inner membrane. This is UPF0259 membrane protein SG1383 from Sodalis glossinidius (strain morsitans).